Reading from the N-terminus, the 183-residue chain is Fetal and adult testis-expressed transcript protein (183 aa).

The disordered stretch occupies residues 42 to 66 (SRSRGASQKKQKLEQKAAGSASAKR). A helical transmembrane segment spans residues 163-181 (TLIIAVLVSASIANLWLWM).

In terms of assembly, interacts with BIK and RNF183. Interacts with IMMT/MIC60and EMD. Testis-specific in fetus (aged from 6 to 11 weeks). In adult, expressed predominantly in testis, with some expression in lung, heart, kidney, adrenal gland and whole brain. Highly expressed in certain types of cancer tissues such as hepatocellular carcinoma, colon and gastric cancer. Weakly expressed in normal pancreas.

Its subcellular location is the mitochondrion. The protein resides in the mitochondrion outer membrane. It localises to the endoplasmic reticulum membrane. In terms of biological role, involved in the regulation of endoplasmic reticulum (ER)-mitochondria coupling. Negatively regulates the ER-mitochondria distance and Ca(2+) transfer from ER to mitochondria possibly implicating it in the regulation of apoptosis. May collaborate with RNF183 to restrain BIK protein levels thus regulating apoptotic signaling. This is Fetal and adult testis-expressed transcript protein (FATE1) from Homo sapiens (Human).